A 302-amino-acid polypeptide reads, in one-letter code: Nuclear egress protein 1 (302 aa).

Positions 1-17 (MPKSVSSHISLATSTGR) are enriched in polar residues. The disordered stretch occupies residues 1–22 (MPKSVSSHISLATSTGRSGPRD). Residues 102 to 227 (CVSLSPFGHS…CILFKTRALH (126 aa)) form a CCCH-type zinc finger.

This sequence belongs to the herpesviridae NEC1 protein family. Forms a heterohexameric complex with NEC2. Interacts with capsid vertex specific component 2/CVC2; this interaction directs the capsid to the host inner nuclear membrane to initiate budding. Phosphorylated at serine residues in the N-terminus. This phosphorylation regulates the localization within the inner nuclear membrane.

It localises to the host nucleus inner membrane. In terms of biological role, plays an essential role in virion nuclear egress, the first step of virion release from infected cell. Within the host nucleus, NEC1 interacts with the newly formed capsid through the vertexes and directs it to the inner nuclear membrane by associating with NEC2. Induces the budding of the capsid at the inner nuclear membrane as well as its envelopment into the perinuclear space. There, the NEC1/NEC2 complex promotes the fusion of the enveloped capsid with the outer nuclear membrane and the subsequent release of the viral capsid into the cytoplasm where it will reach the secondary budding sites in the host Golgi or trans-Golgi network. The protein is Nuclear egress protein 1 of Homo sapiens (Human).